The chain runs to 313 residues: Protein-methionine-sulfoxide reductase catalytic subunit MsrP (313 aa).

The tat-type signal signal peptide spans 1-44 (MARWRPDMAEREATPEALYLRRRDFLALGAAGAVGLLLPRGARA). Residues Asn-76, 79 to 80 (YE), Cys-134, Thr-169, Asn-217, Arg-222, and 233 to 235 (GAK) each bind Mo-molybdopterin.

Belongs to the MsrP family. In terms of assembly, heterodimer of a catalytic subunit (MsrP) and a heme-binding subunit (MsrQ). Mo-molybdopterin serves as cofactor. Post-translationally, predicted to be exported by the Tat system. The position of the signal peptide cleavage has not been experimentally proven.

The protein resides in the periplasm. It catalyses the reaction L-methionyl-[protein] + a quinone + H2O = L-methionyl-(S)-S-oxide-[protein] + a quinol. The catalysed reaction is L-methionyl-[protein] + a quinone + H2O = L-methionyl-(R)-S-oxide-[protein] + a quinol. Its function is as follows. Part of the MsrPQ system that repairs oxidized periplasmic proteins containing methionine sulfoxide residues (Met-O), using respiratory chain electrons. Thus protects these proteins from oxidative-stress damage caused by reactive species of oxygen and chlorine generated by the host defense mechanisms. MsrPQ is essential for the maintenance of envelope integrity under bleach stress, rescuing a wide series of structurally unrelated periplasmic proteins from methionine oxidation. The catalytic subunit MsrP is non-stereospecific, being able to reduce both (R-) and (S-) diastereoisomers of methionine sulfoxide. The sequence is that of Protein-methionine-sulfoxide reductase catalytic subunit MsrP from Anaeromyxobacter dehalogenans (strain 2CP-1 / ATCC BAA-258).